A 457-amino-acid chain; its full sequence is Cell division protein FtsZ (457 aa).

GTP-binding positions include G26–N30, G115–G117, E146, K150, and D193. The segment covering K429–R447 has biased composition (basic and acidic residues). The tract at residues K429–N457 is disordered. Positions S448–N457 are enriched in polar residues.

It belongs to the FtsZ family. As to quaternary structure, homodimer. Polymerizes to form a dynamic ring structure in a strictly GTP-dependent manner. Interacts directly with several other division proteins.

It is found in the cytoplasm. Essential cell division protein that forms a contractile ring structure (Z ring) at the future cell division site. The regulation of the ring assembly controls the timing and the location of cell division. One of the functions of the FtsZ ring is to recruit other cell division proteins to the septum to produce a new cell wall between the dividing cells. Binds GTP and shows GTPase activity. This chain is Cell division protein FtsZ, found in Porphyromonas gingivalis (strain ATCC BAA-308 / W83).